Here is a 368-residue protein sequence, read N- to C-terminus: Phospho-N-acetylmuramoyl-pentapeptide-transferase (368 aa).

9 consecutive transmembrane segments (helical) span residues 30–50 (AAAV…IKYL), 72–92 (LPTM…FLWA), 99–119 (VWLI…DDYM), 139–159 (VLLG…SVLL), 170–190 (LTID…TAVS), 201–221 (GLAS…AYLA), 238–258 (GGEI…FLWF), 264–286 (EIIM…ALLI), and 345–365 (KIVI…LMTL).

Belongs to the glycosyltransferase 4 family. MraY subfamily. The cofactor is Mg(2+).

It is found in the cell inner membrane. The catalysed reaction is UDP-N-acetyl-alpha-D-muramoyl-L-alanyl-gamma-D-glutamyl-meso-2,6-diaminopimeloyl-D-alanyl-D-alanine + di-trans,octa-cis-undecaprenyl phosphate = di-trans,octa-cis-undecaprenyl diphospho-N-acetyl-alpha-D-muramoyl-L-alanyl-D-glutamyl-meso-2,6-diaminopimeloyl-D-alanyl-D-alanine + UMP. It participates in cell wall biogenesis; peptidoglycan biosynthesis. Its function is as follows. Catalyzes the initial step of the lipid cycle reactions in the biosynthesis of the cell wall peptidoglycan: transfers peptidoglycan precursor phospho-MurNAc-pentapeptide from UDP-MurNAc-pentapeptide onto the lipid carrier undecaprenyl phosphate, yielding undecaprenyl-pyrophosphoryl-MurNAc-pentapeptide, known as lipid I. This Chlorobium limicola (strain DSM 245 / NBRC 103803 / 6330) protein is Phospho-N-acetylmuramoyl-pentapeptide-transferase.